We begin with the raw amino-acid sequence, 337 residues long: Cytoskeleton protein RodZ (337 aa).

Residues 1-111 (MNTEATHDQN…LGKRRKKRDG (111 aa)) lie on the Cytoplasmic side of the membrane. Positions 19–71 (LRNAREQLGLSQQAVAERLCLKVSTVRDIEEDKAPADLASTFLRGYIRSYARL) constitute an HTH cro/C1-type domain. The segment at residues 30–49 (QQAVAERLCLKVSTVRDIEE) is a DNA-binding region (H-T-H motif). Residues 112–132 (WLMTFTWLVLFVVVGLTGAWW) traverse the membrane as a helical; Signal-anchor for type II membrane protein segment. The Periplasmic portion of the chain corresponds to 133-337 (WQNHKAQQEE…TLNAEQSPAQ (205 aa)). Residues 155–220 (NAGGDSAQSV…QNAVVAPSQA (66 aa)) form a disordered region. A compositionally biased stretch (polar residues) spans 160–192 (SAQSVPLDTSEAASQDSTPAPTAPVDSTATNAV). Residues 193 to 217 (PQTPDASATTTAPAADAQQNAVVAP) are compositionally biased toward low complexity.

It belongs to the RodZ family.

Its subcellular location is the cell inner membrane. Cytoskeletal protein that is involved in cell-shape control through regulation of the length of the long axis. The polypeptide is Cytoskeleton protein RodZ (Citrobacter koseri (strain ATCC BAA-895 / CDC 4225-83 / SGSC4696)).